Consider the following 347-residue polypeptide: Membrane progestin receptor gamma-B (347 aa).

Over 1-52 (MLSLIKLQRVFNVHQVPKAFHEDGIISGYRHPRSSATECVWSLFQLTNETLN) the chain is Cytoplasmic. The chain crosses the membrane as a helical span at residues 53 to 73 (VWTHFLPTWYFLWKLMTVLLM). The Extracellular portion of the chain corresponds to 74–81 (EDVWNEAY). The helical transmembrane segment at 82-102 (TWPLLVFLFSCCVYPLASSCA) threads the bilayer. The Cytoplasmic portion of the chain corresponds to 103–114 (HTFSSMSTRARH). The helical transmembrane segment at 115-135 (ICYFFDYGALSFYSLGSAISY) threads the bilayer. At 136 to 138 (SAY) the chain is on the extracellular side. Residues 139-159 (VFPDAWLSSSFHAYYISVAVF) traverse the membrane as a helical segment. The Cytoplasmic portion of the chain corresponds to 160–201 (NTVLSTSLACYSRLGLPLLHYSHDIVERFSERQCPRMSKVLR). A helical transmembrane segment spans residues 202-222 (ILAFAYPYLFDNIPLFYRLFV). Residues 223–235 (CVGEGCTDNEANS) lie on the Extracellular side of the membrane. The chain crosses the membrane as a helical span at residues 236-256 (VHVQHTLLAFLTSFLFATHLP). Residues 257 to 314 (ERLAPGRFDYIGHSHQLFHVCAIIGTHFQMKAIEMDMGLRRSQLLASAPAISFNNTIG) lie on the Cytoplasmic side of the membrane. A helical transmembrane segment spans residues 315–335 (AALLCVSVSLGIICVYSLPLL). The Extracellular segment spans residues 336–347 (YSSNPKNTANKE).

The protein belongs to the ADIPOR family.

Its subcellular location is the membrane. Steroid membrane receptor. Binds progesterone. May be involved in oocyte maturation. This chain is Membrane progestin receptor gamma-B, found in Danio rerio (Zebrafish).